The sequence spans 182 residues: Protein Syd (182 aa).

It belongs to the Syd family.

The protein localises to the cell inner membrane. Interacts with the SecY protein in vivo. May bind preferentially to an uncomplexed state of SecY, thus functioning either as a chelating agent for excess SecY in the cell or as a regulatory factor that negatively controls the translocase function. The chain is Protein Syd from Aeromonas hydrophila subsp. hydrophila (strain ATCC 7966 / DSM 30187 / BCRC 13018 / CCUG 14551 / JCM 1027 / KCTC 2358 / NCIMB 9240 / NCTC 8049).